Reading from the N-terminus, the 491-residue chain is Ketol-acid reductoisomerase (NADP(+)) (491 aa).

The region spanning 15–208 is the KARI N-terminal Rossmann domain; sequence AQLGKCRFMG…GGHRAGVLES (194 aa). NADP(+)-binding positions include 45–48, arginine 68, arginine 76, serine 78, and 108–110; these read CGAQ and DKQ. Residue histidine 132 is part of the active site. Glycine 158 lines the NADP(+) pocket. KARI C-terminal knotted domains lie at 209 to 344 and 345 to 484; these read SFVA…TAPQ and YEGK…MTDM. Mg(2+)-binding residues include aspartate 217, glutamate 221, glutamate 389, and glutamate 393. Serine 414 contributes to the substrate binding site.

It belongs to the ketol-acid reductoisomerase family. The cofactor is Mg(2+).

The enzyme catalyses (2R)-2,3-dihydroxy-3-methylbutanoate + NADP(+) = (2S)-2-acetolactate + NADPH + H(+). It carries out the reaction (2R,3R)-2,3-dihydroxy-3-methylpentanoate + NADP(+) = (S)-2-ethyl-2-hydroxy-3-oxobutanoate + NADPH + H(+). It functions in the pathway amino-acid biosynthesis; L-isoleucine biosynthesis; L-isoleucine from 2-oxobutanoate: step 2/4. The protein operates within amino-acid biosynthesis; L-valine biosynthesis; L-valine from pyruvate: step 2/4. Involved in the biosynthesis of branched-chain amino acids (BCAA). Catalyzes an alkyl-migration followed by a ketol-acid reduction of (S)-2-acetolactate (S2AL) to yield (R)-2,3-dihydroxy-isovalerate. In the isomerase reaction, S2AL is rearranged via a Mg-dependent methyl migration to produce 3-hydroxy-3-methyl-2-ketobutyrate (HMKB). In the reductase reaction, this 2-ketoacid undergoes a metal-dependent reduction by NADPH to yield (R)-2,3-dihydroxy-isovalerate. This Escherichia fergusonii (strain ATCC 35469 / DSM 13698 / CCUG 18766 / IAM 14443 / JCM 21226 / LMG 7866 / NBRC 102419 / NCTC 12128 / CDC 0568-73) protein is Ketol-acid reductoisomerase (NADP(+)).